The primary structure comprises 94 residues: Sulfocarbamoylase-1 (94 aa).

As to quaternary structure, homodimer. As to expression, ubiquitous (at protein level). Highest levels of expression in crystalline style followed by digestive gland and mantle.

Its activity is regulated as follows. Strongly inhibited by the serine proteinase inhibitor AEBSF. Weakly inhibited by the proteinase inhibitors BSF and aprotinin, and by EDTA. Not inhibited by the proteinase inhibitors bestatin, E-64 and leupeptin. In terms of biological role, hydrolysis of sulfocarbamoyl esters of paralytic shellfish toxins. Does not hydrolyze the carbamoyl esters of paralytic shellfish toxins. Ester hydrolysis is significantly affected by the stereochemistry of sulfate esters at C-11 of the substrate toxin. The protein is Sulfocarbamoylase-1 of Megangulus venulosus (Japanese bivalve).